The sequence spans 790 residues: Probable quinate dehydrogenase (quinone) (790 aa).

A run of 4 helical transmembrane segments spans residues Gly-22–Leu-42, Ala-48–Leu-68, Leu-77–Leu-94, and Ala-106–Val-126. The disordered stretch occupies residues Arg-171–Gln-200. A compositionally biased stretch (low complexity) spans Gly-174–Gly-187.

The protein belongs to the bacterial PQQ dehydrogenase family. Pyrroloquinoline quinone is required as a cofactor.

The protein resides in the cell membrane. It catalyses the reaction L-quinate + a quinone = 3-dehydroquinate + a quinol. Its pathway is aromatic compound metabolism; 3,4-dihydroxybenzoate biosynthesis; 3-dehydroquinate from D-quinate (PQQ route): step 1/1. This chain is Probable quinate dehydrogenase (quinone) (qumA), found in Xanthomonas campestris pv. juglandis (Xanthomonas arboricola pv. juglandis).